A 111-amino-acid chain; its full sequence is Cytochrome c6-like (111 aa).

The N-terminal stretch at 1–25 (MQKFLKLVLVTFLFLISTLTPPANA) is a signal peptide. Heme c contacts are provided by Cys-39, Cys-42, His-43, and Met-83.

This sequence belongs to the cytochrome c family. PetJ subfamily. Binds 1 heme c group covalently per subunit.

The protein resides in the cellular thylakoid lumen. The polypeptide is Cytochrome c6-like (Nostoc sp. (strain PCC 7120 / SAG 25.82 / UTEX 2576)).